The following is an 841-amino-acid chain: Envelope glycoprotein H (841 aa).

The first 17 residues, 1 to 17 (MFALVLAVVILPLWTTA), serve as a signal peptide directing secretion. 3 N-linked (GlcNAc...) asparagine; by host glycosylation sites follow: asparagine 18, asparagine 45, and asparagine 217. At 18–802 (NKSYVTPTPA…ERRQAIRMSG (785 aa)) the chain is on the virion surface side. An interaction with gL region spans residues 246–309 (DSGRVEVNIG…DPGPSYRVYL (64 aa)). N-linked (GlcNAc...) asparagine; by host glycans are attached at residues asparagine 317, asparagine 499, asparagine 522, asparagine 760, and asparagine 783. A helical transmembrane segment spans residues 803–823 (QYLGASLGGAFLAVVGFGIIG). Over 824–841 (WMLCGNSRLREYNKIPLT) the chain is Intravirion.

This sequence belongs to the herpesviridae glycoprotein H family. In terms of assembly, interacts with glycoprotein L (gL); this interaction is necessary for the correct processing and cell surface expression of gH. The heterodimer gH/gL seems to interact with gB trimers during fusion. N-glycosylated, O-glycosylated, and sialylated.

The protein resides in the virion membrane. The protein localises to the host cell membrane. It localises to the host endosome membrane. In terms of biological role, the heterodimer glycoprotein H-glycoprotein L is required for the fusion of viral and plasma membranes leading to virus entry into the host cell. Following initial binding to host receptor, membrane fusion is mediated by the fusion machinery composed of gB and the heterodimer gH/gL. May also be involved in the fusion between the virion envelope and the outer nuclear membrane during virion morphogenesis. This chain is Envelope glycoprotein H, found in Varicella-zoster virus (strain Dumas) (HHV-3).